The primary structure comprises 397 residues: Elongation factor Tu (397 aa).

The tr-type G domain occupies 10-206 (KPHVNIGTIG…AVDEYIPTPE (197 aa)). Residues 19 to 26 (GHIDHGKT) form a G1 region. Residue 19 to 26 (GHIDHGKT) coordinates GTP. Residue threonine 26 coordinates Mg(2+). The G2 stretch occupies residues 62–66 (GITIS). The tract at residues 83 to 86 (DCPG) is G3. GTP-binding positions include 83 to 87 (DCPGH) and 138 to 141 (NKCD). The G4 stretch occupies residues 138–141 (NKCD). The G5 stretch occupies residues 176–178 (AAF).

Belongs to the TRAFAC class translation factor GTPase superfamily. Classic translation factor GTPase family. EF-Tu/EF-1A subfamily. Monomer.

It is found in the cytoplasm. It carries out the reaction GTP + H2O = GDP + phosphate + H(+). In terms of biological role, GTP hydrolase that promotes the GTP-dependent binding of aminoacyl-tRNA to the A-site of ribosomes during protein biosynthesis. The polypeptide is Elongation factor Tu (Nocardioides sp. (strain ATCC BAA-499 / JS614)).